Here is an 862-residue protein sequence, read N- to C-terminus: DNA replication licensing factor MCM4 (862 aa).

Positions 1 to 10 (MSSPASTPSR) are enriched in low complexity. Disordered regions lie at residues 1–71 (MSSP…FSSP) and 90–121 (TYGT…GSAR). Ser-2 is modified (N-acetylserine). Position 6 is a phosphoserine (Ser-6). A phosphothreonine mark is found at Thr-7 and Thr-19. 3 positions are modified to phosphoserine: Ser-26, Ser-31, and Ser-32. The segment covering 61–71 (PPAQNALFSSP) has biased composition (polar residues). Position 101 is a phosphothreonine (Thr-101). The residue at position 104 (Ser-104) is a Phosphoserine. Thr-109 carries the post-translational modification Phosphothreonine. A phosphoserine mark is found at Ser-119, Ser-130, Ser-141, and Ser-144. Lys-219 is subject to N6-acetyllysine. Lys-438 is covalently cross-linked (Glycyl lysine isopeptide (Lys-Gly) (interchain with G-Cter in SUMO2)). Lys-449 is modified (N6-acetyllysine). The 210-residue stretch at 457 to 666 (IYERLASALA…YDRRLAHHLV (210 aa)) folds into the MCM domain. Residues Tyr-470, Arg-496, Lys-515, Ser-516, Asn-617, Arg-642, Arg-731, and Glu-734 each coordinate ATP. The Arginine finger motif lies at 641-644 (SRFD). Lys-797 is covalently cross-linked (Glycyl lysine isopeptide (Lys-Gly) (interchain with G-Cter in SUMO2)). Residue Lys-857 is modified to N6-acetyllysine.

Belongs to the MCM family. As to quaternary structure, component of the MCM2-7 complex. The complex forms a toroidal hexameric ring with the proposed subunit order MCM2-MCM6-MCM4-MCM7-MCM3-MCM5. Component of the CMG helicase complex, a hexameric ring of related MCM2-7 subunits stabilized by CDC45 and the tetrameric GINS complex. Interacts with MCMBP. Sumoylated; SUMO2 modified in response to stress caused by inhibition of proteasome activity (in vitro).

The protein resides in the nucleus. Its subcellular location is the chromosome. It catalyses the reaction ATP + H2O = ADP + phosphate + H(+). Its function is as follows. Acts as a component of the MCM2-7 complex (MCM complex) which is the replicative helicase essential for 'once per cell cycle' DNA replication initiation and elongation in eukaryotic cells. Core component of CDC45-MCM-GINS (CMG) helicase, the molecular machine that unwinds template DNA during replication, and around which the replisome is built. The active ATPase sites in the MCM2-7 ring are formed through the interaction surfaces of two neighboring subunits such that a critical structure of a conserved arginine finger motif is provided in trans relative to the ATP-binding site of the Walker A box of the adjacent subunit. The six ATPase active sites, however, are likely to contribute differentially to the complex helicase activity. This chain is DNA replication licensing factor MCM4 (Mcm4), found in Mus musculus (Mouse).